A 286-amino-acid polypeptide reads, in one-letter code: Phosducin-like protein 2 (286 aa).

Phosphoserine is present on residues Ser35 and Ser62. A thioredoxin fold region spans residues 96 to 286 (FGEVFHINKP…INDDDDGFFD (191 aa)).

This sequence belongs to the phosducin family. Interacts with the G protein beta-gamma subunit complex (STE4-STE18 complex). Interacts with CCT2; this interaction leads to inhibition of CCT complex mediated actin folding.

Its subcellular location is the cytoplasm. Functionally, essential for cell growth. Inhibits early G-protein signaling events following pheromone stimulation. Inhibits the folding activity of the chaperonin-containing T-complex (CCT) CCT2 which leads to inhibition of cytoskeletal actin folding. Plays a role in cell cycle progression in G1/S phase. This is Phosducin-like protein 2 from Saccharomyces cerevisiae (strain ATCC 204508 / S288c) (Baker's yeast).